The primary structure comprises 368 residues: Phosphoserine aminotransferase (368 aa).

Arginine 44 is a binding site for L-glutamate. Pyridoxal 5'-phosphate is bound by residues 78–79 (AT), tryptophan 104, threonine 157, aspartate 179, and glutamine 202. Lysine 203 carries the N6-(pyridoxal phosphate)lysine modification. 244 to 245 (NT) serves as a coordination point for pyridoxal 5'-phosphate.

This sequence belongs to the class-V pyridoxal-phosphate-dependent aminotransferase family. SerC subfamily. In terms of assembly, homodimer. Requires pyridoxal 5'-phosphate as cofactor.

It is found in the cytoplasm. The enzyme catalyses O-phospho-L-serine + 2-oxoglutarate = 3-phosphooxypyruvate + L-glutamate. The catalysed reaction is 4-(phosphooxy)-L-threonine + 2-oxoglutarate = (R)-3-hydroxy-2-oxo-4-phosphooxybutanoate + L-glutamate. It functions in the pathway amino-acid biosynthesis; L-serine biosynthesis; L-serine from 3-phospho-D-glycerate: step 2/3. Its pathway is cofactor biosynthesis; pyridoxine 5'-phosphate biosynthesis; pyridoxine 5'-phosphate from D-erythrose 4-phosphate: step 3/5. Functionally, catalyzes the reversible conversion of 3-phosphohydroxypyruvate to phosphoserine and of 3-hydroxy-2-oxo-4-phosphonooxybutanoate to phosphohydroxythreonine. The sequence is that of Phosphoserine aminotransferase from Neisseria gonorrhoeae (strain ATCC 700825 / FA 1090).